The chain runs to 303 residues: Acetylglutamate kinase (303 aa).

Residues 76–77, Arg-98, and Asn-199 contribute to the substrate site; that span reads GG.

It belongs to the acetylglutamate kinase family. ArgB subfamily.

It is found in the cytoplasm. The catalysed reaction is N-acetyl-L-glutamate + ATP = N-acetyl-L-glutamyl 5-phosphate + ADP. It functions in the pathway amino-acid biosynthesis; L-arginine biosynthesis; N(2)-acetyl-L-ornithine from L-glutamate: step 2/4. Functionally, catalyzes the ATP-dependent phosphorylation of N-acetyl-L-glutamate. The polypeptide is Acetylglutamate kinase (Clavibacter sepedonicus (Clavibacter michiganensis subsp. sepedonicus)).